A 200-amino-acid polypeptide reads, in one-letter code: Putative HTH-type transcriptional regulator YhjB (200 aa).

One can recognise an HTH luxR-type domain in the interval 135-200 (DIKDLKSLSA…QAAMMLNISS (66 aa)). Positions 159–178 (NKEIGRALNISTGTVKAHLE) form a DNA-binding region, H-T-H motif.

The polypeptide is Putative HTH-type transcriptional regulator YhjB (yhjB) (Escherichia coli (strain K12)).